The following is a 651-amino-acid chain: Crossover junction endonuclease MUS81 (651 aa).

A disordered region spans residues 99 to 124; the sequence is RKHEVSDTSNLPDAKPKKQRKQKQYI. Over residues 115–124 the composition is skewed to basic residues; sequence KKQRKQKQYI. The ERCC4 domain maps to 361–458; the sequence is ILIIDNREIR…QFYYLVEDVV (98 aa).

It belongs to the XPF family. As to quaternary structure, interacts with EME1. Mg(2+) serves as cofactor.

It localises to the nucleus. Interacts with EME1 to form a DNA structure-specific endonuclease with substrate preference for branched DNA structures with a 5'-end at the branch nick. Typical substrates include 3'-flap structures, D-loops, replication forks and nicked Holliday junctions. May be required in mitosis for the processing of stalled or collapsed replication fork intermediates. May be required in meiosis for the repair of meiosis-specific double strand breaks subsequent to single-end invasion (SEI). The polypeptide is Crossover junction endonuclease MUS81 (MUS81) (Debaryomyces hansenii (strain ATCC 36239 / CBS 767 / BCRC 21394 / JCM 1990 / NBRC 0083 / IGC 2968) (Yeast)).